The following is a 218-amino-acid chain: Probable transaldolase (218 aa).

The active-site Schiff-base intermediate with substrate is the lysine 87.

This sequence belongs to the transaldolase family. Type 3B subfamily.

It is found in the cytoplasm. The enzyme catalyses D-sedoheptulose 7-phosphate + D-glyceraldehyde 3-phosphate = D-erythrose 4-phosphate + beta-D-fructose 6-phosphate. It participates in carbohydrate degradation; pentose phosphate pathway; D-glyceraldehyde 3-phosphate and beta-D-fructose 6-phosphate from D-ribose 5-phosphate and D-xylulose 5-phosphate (non-oxidative stage): step 2/3. Functionally, transaldolase is important for the balance of metabolites in the pentose-phosphate pathway. The polypeptide is Probable transaldolase (Flavobacterium psychrophilum (strain ATCC 49511 / DSM 21280 / CIP 103535 / JIP02/86)).